Here is a 329-residue protein sequence, read N- to C-terminus: DNA-directed RNA polymerase subunit alpha (329 aa).

The tract at residues 1 to 231 (MQNSLLKPKA…EQLAVFAQLE (231 aa)) is alpha N-terminal domain (alpha-NTD). Positions 249–329 (FDPILLRPVD…SWPPAALEKR (81 aa)) are alpha C-terminal domain (alpha-CTD).

This sequence belongs to the RNA polymerase alpha chain family. Homodimer. The RNAP catalytic core consists of 2 alpha, 1 beta, 1 beta' and 1 omega subunit. When a sigma factor is associated with the core the holoenzyme is formed, which can initiate transcription.

The enzyme catalyses RNA(n) + a ribonucleoside 5'-triphosphate = RNA(n+1) + diphosphate. Its function is as follows. DNA-dependent RNA polymerase catalyzes the transcription of DNA into RNA using the four ribonucleoside triphosphates as substrates. The protein is DNA-directed RNA polymerase subunit alpha of Albidiferax ferrireducens (strain ATCC BAA-621 / DSM 15236 / T118) (Rhodoferax ferrireducens).